The primary structure comprises 473 residues: UDP-N-acetylmuramoylalanine--D-glutamate ligase (473 aa).

120 to 126 (GSNGKTT) is an ATP binding site.

This sequence belongs to the MurCDEF family.

Its subcellular location is the cytoplasm. The enzyme catalyses UDP-N-acetyl-alpha-D-muramoyl-L-alanine + D-glutamate + ATP = UDP-N-acetyl-alpha-D-muramoyl-L-alanyl-D-glutamate + ADP + phosphate + H(+). Its pathway is cell wall biogenesis; peptidoglycan biosynthesis. In terms of biological role, cell wall formation. Catalyzes the addition of glutamate to the nucleotide precursor UDP-N-acetylmuramoyl-L-alanine (UMA). The sequence is that of UDP-N-acetylmuramoylalanine--D-glutamate ligase from Nitrosospira multiformis (strain ATCC 25196 / NCIMB 11849 / C 71).